The primary structure comprises 273 residues: Polyamine aminopropyltransferase (273 aa).

Residues 5-238 (ENWFSERYSD…GFWSFTIASE (234 aa)) form the PABS domain. Q34 is a binding site for S-methyl-5'-thioadenosine. 2 residues coordinate spermidine: H65 and D90. Residues E109 and 140–141 (DG) each bind S-methyl-5'-thioadenosine. The Proton acceptor role is filled by D158. 158–161 (DSTD) lines the spermidine pocket. Residue P165 coordinates S-methyl-5'-thioadenosine.

Belongs to the spermidine/spermine synthase family. Homodimer or homotetramer.

The protein resides in the cytoplasm. The catalysed reaction is S-adenosyl 3-(methylsulfanyl)propylamine + putrescine = S-methyl-5'-thioadenosine + spermidine + H(+). The protein operates within amine and polyamine biosynthesis; spermidine biosynthesis; spermidine from putrescine: step 1/1. Functionally, catalyzes the irreversible transfer of a propylamine group from the amino donor S-adenosylmethioninamine (decarboxy-AdoMet) to putrescine (1,4-diaminobutane) to yield spermidine. The sequence is that of Polyamine aminopropyltransferase from Thermoplasma volcanium (strain ATCC 51530 / DSM 4299 / JCM 9571 / NBRC 15438 / GSS1).